A 1259-amino-acid chain; its full sequence is Translocation and assembly module subunit TamB (1259 aa).

N-formylmethionine is present on Met1. Residues 1 to 6 (MSLWKK) are Cytoplasmic-facing. A helical; Signal-anchor for type II membrane protein transmembrane segment spans residues 7–27 (ISLGVVIVILLLLGSVAFLVG). At 28–1259 (TTSGLHLVFK…ALDLLYQFEF (1232 aa)) the chain is on the periplasmic side.

It belongs to the TamB family. In terms of assembly, interacts with TamA to form the translocation and assembly module (TAM).

It localises to the cell inner membrane. Functionally, component of the translocation and assembly module (TAM), which facilitates the insertion and assembly of specific beta-barrel proteins into the outer membrane. Promotes the assembly and secretion across the outer membrane of a subset of autotransporters, such as Ag43. Involved in the assembly of the outer membrane usher protein FimD. In vitro, when TAM is reconstituted into preformed liposomes, it can promote the assembly of several outer membrane proteins, including OmpA, EspP, Ag43 and FadL. TamA is sufficient to catalyze a low level of outer membrane protein (OMP) assembly, but both TamA and TamB are required for efficient OMP assembly. TamB may regulate TamA activity. It could regulate conformational changes in TamA to drive its function in OMP assembly. It could also act as a chaperone that facilitate the transport of nascent membrane proteins across the periplasm to TamA in the outer membrane. In addition, is involved in outer membrane lipid homeostasis. Likely transports phospholipids between the inner membrane and the outer membrane. It would provide a bridge-like structure that protects phospholipids as they travel across the periplasm. One possible explanation for the apparent dual function of TAM is that TamB is a somewhat generic transporter of hydrophobic molecules. Its function is as follows. TamB, YdbH and YhdP are redundant, but not equivalent, in performing an essential function for growth and maintaining lipid homeostasis in the outer membrane. The transport functions of TamB and YhdP could be differentiated according to the fatty acid saturation state of the phospholipids, with TamB transporting more unsaturated phospholipids and YhdP more saturated phospholipids. Any of these three proteins is sufficient for growth. The chain is Translocation and assembly module subunit TamB from Escherichia coli (strain K12).